The sequence spans 155 residues: Ribosome maturation factor RimP (155 aa).

This sequence belongs to the RimP family.

It localises to the cytoplasm. Its function is as follows. Required for maturation of 30S ribosomal subunits. The sequence is that of Ribosome maturation factor RimP from Parasynechococcus marenigrum (strain WH8102).